The primary structure comprises 84 residues: NADH-ubiquinone oxidoreductase chain 4L (84 aa).

2 helical membrane passes run 19–39 (ITLL…LIHI) and 50–70 (IFSL…LSIL).

This sequence belongs to the complex I subunit 4L family.

Its subcellular location is the mitochondrion membrane. The catalysed reaction is a ubiquinone + NADH + 5 H(+)(in) = a ubiquinol + NAD(+) + 4 H(+)(out). Its function is as follows. Core subunit of the mitochondrial membrane respiratory chain NADH dehydrogenase (Complex I) that is believed to belong to the minimal assembly required for catalysis. Complex I functions in the transfer of electrons from NADH to the respiratory chain. The immediate electron acceptor for the enzyme is believed to be ubiquinone. This Candida albicans (strain SC5314 / ATCC MYA-2876) (Yeast) protein is NADH-ubiquinone oxidoreductase chain 4L (NAD4L).